Reading from the N-terminus, the 232-residue chain is 7-cyano-7-deazaguanine synthase (232 aa).

L7–T17 contacts ATP. 4 residues coordinate Zn(2+): C195, C206, C209, and C212.

It belongs to the QueC family. Zn(2+) serves as cofactor.

It catalyses the reaction 7-carboxy-7-deazaguanine + NH4(+) + ATP = 7-cyano-7-deazaguanine + ADP + phosphate + H2O + H(+). It participates in purine metabolism; 7-cyano-7-deazaguanine biosynthesis. In terms of biological role, catalyzes the ATP-dependent conversion of 7-carboxy-7-deazaguanine (CDG) to 7-cyano-7-deazaguanine (preQ(0)). The protein is 7-cyano-7-deazaguanine synthase of Methanocaldococcus jannaschii (strain ATCC 43067 / DSM 2661 / JAL-1 / JCM 10045 / NBRC 100440) (Methanococcus jannaschii).